Here is a 511-residue protein sequence, read N- to C-terminus: MATKLSEQEIIRHQKMNELKKINIDPFGKKFVPSHSIEQILLQYQKADSLALEQSQIHVCVAGRIVLKRGQGKAGFLHLQDFNFRMQAYIKLDLVGKDAFQIYQNCDLGDIIGIKGFLFKTKTQELTIKALEFIHLTKALKPLPDKFHGLQNREEMRKNRYVDLIVNEKTRQVFLTRSLIMKYIRNFFDNQGFLEVETPILQPTLGGASAKPFITHHNALNCDFYLRIATELPLKKLIVGGMNKVYEIGRLFRNEGIDATHNPEFSTIEAYLAYADMQDIMDLTKQCLQELAQKLFGKLQFTYQNQEIDFSHFAKVSMVASIKEKTGIDFTDNFTLEQCLSLAKKHQIEVMPHFSQGHIIEAFFGKYVENTLIQPTFVYGHPLEISPLAKQNEADPRFTDRFELFIVGKEFANAFSELNDPIEQEKRFLNQLQQKQLGNDEANDMDYDFLNALNYGMPPTGGLGMGLDRLVMLLTDTANIRDVILFPHCKNQNKFSQNKTANKVLTNNDNE.

Mg(2+) contacts are provided by Glu-403 and Glu-410.

Belongs to the class-II aminoacyl-tRNA synthetase family. In terms of assembly, homodimer. It depends on Mg(2+) as a cofactor.

It is found in the cytoplasm. The catalysed reaction is tRNA(Lys) + L-lysine + ATP = L-lysyl-tRNA(Lys) + AMP + diphosphate. In Onion yellows phytoplasma (strain OY-M), this protein is Lysine--tRNA ligase.